A 213-amino-acid polypeptide reads, in one-letter code: EEF1A lysine methyltransferase 1 (213 aa).

Belongs to the class I-like SAM-binding methyltransferase superfamily. EFM5 family.

It localises to the cytoplasm. The catalysed reaction is L-lysyl-[protein] + 3 S-adenosyl-L-methionine = N(6),N(6),N(6)-trimethyl-L-lysyl-[protein] + 3 S-adenosyl-L-homocysteine + 3 H(+). Protein-lysine methyltransferase that selectively catalyzes the trimethylation of EEF1A at 'Lys-79'. In Gallus gallus (Chicken), this protein is EEF1A lysine methyltransferase 1.